We begin with the raw amino-acid sequence, 325 residues long: Glutarate 2-hydroxylase (325 aa).

Fe cation contacts are provided by His160, Asp162, and His292.

This sequence belongs to the glutarate hydroxylase family. As to quaternary structure, homotetramer. It depends on Fe(2+) as a cofactor.

The enzyme catalyses glutarate + 2-oxoglutarate + O2 = (S)-2-hydroxyglutarate + succinate + CO2. It functions in the pathway amino-acid degradation. Acts as an alpha-ketoglutarate-dependent dioxygenase catalyzing hydroxylation of glutarate (GA) to L-2-hydroxyglutarate (L2HG). Functions in a L-lysine degradation pathway that proceeds via cadaverine, glutarate and L-2-hydroxyglutarate. This chain is Glutarate 2-hydroxylase, found in Pseudomonas putida (strain GB-1).